Reading from the N-terminus, the 228-residue chain is E3 ubiquitin-protein ligase RNF114 (228 aa).

Residues 29-68 form an RING-type zinc finger; that stretch reads CPVCLEVYEKPVQVPCGHVFCSACLQECLKPKKPVCGVCR. The Zn(2+) site is built by Cys-91 and Cys-94. The segment at 91 to 110 adopts a C2HC RNF-type zinc-finger fold; that stretch reads CHGCRKNFFLSKIRAHVATC. Lys-102 carries the N6-acetyllysine modification. His-106 and Cys-110 together coordinate Zn(2+). Lys-112 carries the N6-acetyllysine modification.

In terms of assembly, interacts with XAF1, the interaction increases XAF1 stability and proapoptotic effects, and may regulate IFN signaling. In terms of processing, autoubiquitinated. Polyubiquitinated in the presence of E2 enzymes UBE2D1, UBE2D2 and UBE2D3, but only monoubiquitinated in the presence of UBE2E1.

The protein localises to the cytoplasm. The protein resides in the nucleus. It catalyses the reaction S-ubiquitinyl-[E2 ubiquitin-conjugating enzyme]-L-cysteine + [acceptor protein]-L-lysine = [E2 ubiquitin-conjugating enzyme]-L-cysteine + N(6)-ubiquitinyl-[acceptor protein]-L-lysine.. It functions in the pathway protein modification; protein ubiquitination. In terms of biological role, E3 ubiquitin-protein ligase that promotes the ubiquitination of various substrates. In turn, participates in the regulation of many biological processes including cell cycle, apoptosis, osteoclastogenesis as well as innate or adaptive immunity. Acts as negative regulator of NF-kappa-B-dependent transcription by promoting the ubiquitination and stabilization of the NF-kappa-B inhibitor TNFAIP3. May promote the ubiquitination of TRAF6 as well. Also acts as a negative regulator of T-cell activation. Inhibits cellular dsRNA responses and interferon production by targeting MAVS component for proteasomal degradation. Ubiquitinates the CDK inhibitor CDKN1A leading to its degradationand probably also CDKN1B and CDKN1C. This activity stimulates cell cycle G1-to-S phase transition and suppresses cellular senescence. May play a role in spermatogenesis. Inhibits classical swine fever virus replication by mediating 'K27'-linked ubiquitination of viral NS4B and inducing its degradation via the proteasome. In Sus scrofa (Pig), this protein is E3 ubiquitin-protein ligase RNF114 (RNF114).